Consider the following 235-residue polypeptide: Putative homeobox-leucine zipper protein ATHB-51 (235 aa).

A DNA-binding region (homeobox) is located at residues 74-133; that stretch reads EMIKKKRLTSGQLASLERSFQEEIKLDSDRKVKLSRELGLQPRQIAVWFQNRRARWKAKQ. The tract at residues 134 to 162 is leucine-zipper; sequence LEQLYDSLRQEYDVVSREKQMLHDEVKKL.

The protein belongs to the HD-ZIP homeobox family. Class I subfamily. In terms of tissue distribution, widely expressed.

The protein resides in the nucleus. In terms of biological role, putative transcription factor. The polypeptide is Putative homeobox-leucine zipper protein ATHB-51 (ATHB-51) (Arabidopsis thaliana (Mouse-ear cress)).